Here is a 746-residue protein sequence, read N- to C-terminus: Histone-lysine N-methyltransferase EZH2 (746 aa).

The interaction with DNMT1, DNMT3A and DNMT3B stretch occupies residues 1–340; the sequence is MGQTGKKSEK…AKEFAAALTA (340 aa). The residue at position 21 (S21) is a Phosphoserine; by PKB/AKT1. The tract at residues 39-68 is interaction with EED; the sequence is KSMFSSNRQKILERTEILNQEWKQRRIQPV. O-linked (GlcNAc) serine glycosylation occurs at S75. S76 is modified (phosphoserine). Positions 180 to 222 are disordered; the sequence is QYNDDDDDDDGDDPEEREEKQKDLEDHRDDKESRPPRKFPSDK. Over residues 182–195 the composition is skewed to acidic residues; the sequence is NDDDDDDDGDDPEE. Residues 196-222 are compositionally biased toward basic and acidic residues; it reads REEKQKDLEDHRDDKESRPPRKFPSDK. The tract at residues 329-522 is interaction with CDYL; the sequence is EGAKEFAAAL…SSNHVYNYQP (194 aa). A Phosphothreonine modification is found at T339. The tract at residues 340-426 is disordered; the sequence is AERIKTPPKR…PIKMKPNIEP (87 aa). T345 bears the Phosphothreonine; by CDK1 and CDK2 mark. Basic residues predominate over residues 345–357; it reads TPPKRPGGRRRGR. S363 and S366 each carry phosphoserine. At T367 the chain carries Phosphothreonine. A compositionally biased stretch (basic and acidic residues) spans 374-385; the sequence is ESKDTDSDREAG. Residue T487 is modified to Phosphothreonine. Positions 503-605 constitute a CXC domain; that stretch reads CRKIQLKKDG…SKNVSCKNCS (103 aa). One can recognise an SET domain in the interval 612-727; the sequence is KHLLLAPSDV…TGEELFFDYR (116 aa). Residue K634 forms a Glycyl lysine isopeptide (Lys-Gly) (interchain with G-Cter in SUMO2) linkage.

Belongs to the class V-like SAM-binding methyltransferase superfamily. Histone-lysine methyltransferase family. EZ subfamily. In terms of assembly, component of the PRC2/EED-EZH2 complex, which includes EED, EZH2, SUZ12, RBBP4 and RBBP7 and possibly AEBP2. The minimum components required for methyltransferase activity of the PRC2/EED-EZH2 complex are EED, EZH2 and SUZ12. The PRC2 complex may also interact with DNMT1, DNMT3A, DNMT3B and PHF1 via the EZH2 subunit and with SIRT1 via the SUZ12 subunit. Interacts with HDAC1 and HDAC2. Binds ATRX via the SET domain. Interacts with PRAME. Interacts with CDYL. Interacts with CLOCK, BMAL1 and CRY1. Interacts with DNMT3L; the interaction is direct. Interacts with EZHIP; the interaction blocks EZH2 methyltransferase activity. Interacts with ZNF263; recruited to the SIX3 promoter along with other proteins involved in chromatin modification and transcriptional corepression where it contributes to transcriptional repression. Interacts with ARMC12. Interacts with ZMYND8; the interaction is dependent on the presence of chromatin. Interacts with DDX18; this interaction inhibits the PRC2 complex. Post-translationally, phosphorylated by AKT1. Phosphorylation by AKT1 reduces methyltransferase activity. Phosphorylation at Thr-345 by CDK1 and CDK2 promotes maintenance of H3K27me3 levels at EZH2-target loci, thus leading to epigenetic gene silencing. In terms of processing, sumoylated. Glycosylated: O-GlcNAcylation at Ser-75 by OGT increases stability of EZH2 and facilitates the formation of H3K27me3 by the PRC2/EED-EZH2 complex. As to expression, in the ovary, expressed in primordial follicles and oocytes and also in external follicle cells (at protein level). Expressed in many tissues. Overexpressed in numerous tumor types including carcinomas of the breast, colon, larynx, lymphoma and testis.

It is found in the nucleus. The enzyme catalyses L-lysyl(27)-[histone H3] + 3 S-adenosyl-L-methionine = N(6),N(6),N(6)-trimethyl-L-lysyl(27)-[histone H3] + 3 S-adenosyl-L-homocysteine + 3 H(+). Its function is as follows. Polycomb group (PcG) protein. Catalytic subunit of the PRC2/EED-EZH2 complex, which methylates 'Lys-9' (H3K9me) and 'Lys-27' (H3K27me) of histone H3, leading to transcriptional repression of the affected target gene. Able to mono-, di- and trimethylate 'Lys-27' of histone H3 to form H3K27me1, H3K27me2 and H3K27me3, respectively. Displays a preference for substrates with less methylation, loses activity when progressively more methyl groups are incorporated into H3K27, H3K27me0 &gt; H3K27me1 &gt; H3K27me2. Compared to EZH1-containing complexes, it is more abundant in embryonic stem cells and plays a major role in forming H3K27me3, which is required for embryonic stem cell identity and proper differentiation. The PRC2/EED-EZH2 complex may also serve as a recruiting platform for DNA methyltransferases, thereby linking two epigenetic repression systems. Genes repressed by the PRC2/EED-EZH2 complex include HOXC8, HOXA9, MYT1, CDKN2A and retinoic acid target genes. EZH2 can also methylate non-histone proteins such as the transcription factor GATA4 and the nuclear receptor RORA. Regulates the circadian clock via histone methylation at the promoter of the circadian genes. Essential for the CRY1/2-mediated repression of the transcriptional activation of PER1/2 by the CLOCK-BMAL1 heterodimer; involved in the di and trimethylation of 'Lys-27' of histone H3 on PER1/2 promoters which is necessary for the CRY1/2 proteins to inhibit transcription. The polypeptide is Histone-lysine N-methyltransferase EZH2 (Homo sapiens (Human)).